A 145-amino-acid chain; its full sequence is MQEVTIYSDGACKGNPGPGGWGAVLVAGGHEKELFGGESPTTNNRMELMAVIEALRALKRPCIVNIYTDSQYVQKGISEWIHGWKARGWKTADKKPVKNADLWQALDEAQKPHQITWHWVRGHNGHPGNERADALANRGVASINT.

An RNase H type-1 domain is found at 1–141 (MQEVTIYSDG…ADALANRGVA (141 aa)). The Mg(2+) site is built by Asp-9, Glu-47, Asp-69, and Asp-133.

The protein belongs to the RNase H family. Monomer. Mg(2+) serves as cofactor.

It localises to the cytoplasm. It carries out the reaction Endonucleolytic cleavage to 5'-phosphomonoester.. In terms of biological role, endonuclease that specifically degrades the RNA of RNA-DNA hybrids. The sequence is that of Ribonuclease H from Cupriavidus metallidurans (strain ATCC 43123 / DSM 2839 / NBRC 102507 / CH34) (Ralstonia metallidurans).